Consider the following 107-residue polypeptide: Auxin-responsive protein SAUR50 (107 aa).

It belongs to the ARG7 family. Interacts with BZR1. Expressed in cotyledons, leaves, flowers and siliques.

It localises to the cell membrane. Its function is as follows. Provide a mechanistic link between auxin and plasma membrane H(+)-ATPases (PM H(+)-ATPases, e.g. AHA1 and AHA2), and triggers PM H(+)-ATPases activity by promoting phosphorylation of their C-terminal autoinhibitory domain as a result of PP2C-D subfamily of type 2C phosphatases inhibition, thus leading to the acidification of the apoplast and the facilitation of solutes and water uptake to drive cell expansion. Triggers plant growth probably by promoting cell elongation. Regulates branch angles and bending. Effector of hormonal and environmental signals in plant growth. This Arabidopsis thaliana (Mouse-ear cress) protein is Auxin-responsive protein SAUR50.